The following is a 653-amino-acid chain: Chaperone protein DnaK (653 aa).

At Thr198 the chain carries Phosphothreonine; by autocatalysis. Residues 608–617 show a composition bias toward low complexity; that stretch reads DPEAAAHAAG. A disordered region spans residues 608–653; that stretch reads DPEAAAHAAGMHGGAATGGGDGANKHGKGAEDVVEAEFEEVNDDKK. Gly residues predominate over residues 618 to 629; it reads MHGGAATGGGDG. Residues 639 to 653 are compositionally biased toward acidic residues; that stretch reads DVVEAEFEEVNDDKK.

It belongs to the heat shock protein 70 family.

In terms of biological role, acts as a chaperone. This Magnetococcus marinus (strain ATCC BAA-1437 / JCM 17883 / MC-1) protein is Chaperone protein DnaK.